The following is a 177-amino-acid chain: Protein Flattop (177 aa).

The interval 113–177 (ILGKPHDPDS…TPGPQRPAKS (65 aa)) is disordered. The segment covering 115–124 (GKPHDPDSQK) has biased composition (basic and acidic residues). The segment covering 132–163 (TKTVQQARSPTIIPSSPAANLNSPDELQSSHP) has biased composition (polar residues).

It belongs to the Flattop family. Microtubule inner protein component of sperm flagellar doublet microtubules. Interacts with DLG3. Expressed in airway epithelial cells.

Its subcellular location is the cytoplasm. The protein resides in the cytoskeleton. It localises to the cilium basal body. The protein localises to the cell projection. It is found in the cilium. Its subcellular location is the apical cell membrane. The protein resides in the cilium axoneme. It localises to the flagellum axoneme. In terms of biological role, microtubule inner protein (MIP) part of the dynein-decorated doublet microtubules (DMTs) in cilia axoneme. Acts as a regulator of cilium basal body docking and positioning in mono- and multiciliated cells. Regulates basal body docking and cilia formation in multiciliated lung cells. Regulates kinocilium positioning and stereocilia bundle morphogenesis in the inner ear. The chain is Protein Flattop from Homo sapiens (Human).